Reading from the N-terminus, the 717-residue chain is Methylcrotonoyl-CoA carboxylase subunit alpha, mitochondrial (717 aa).

The N-terminal 38 residues, Met1 to Gly38, are a transit peptide targeting the mitochondrion. A Biotin carboxylation domain is found at Ile45 to Lys490. Lys159 is an ATP binding site. In terms of domain architecture, ATP-grasp spans Lys163 to Ala360. An N6-acetyllysine mark is found at Lys180 and Lys193. Residues Lys201 and Gly207 to Gly208 contribute to the ATP site. Lys233 bears the N6-acetyllysine mark. The ATP site is built by His251, His278, and Glu318. Residue Arg335 is part of the active site. Position 490 is an N6-acetyllysine (Lys490). N6-acetyllysine; alternate is present on Lys577. Position 577 is an N6-succinyllysine; alternate (Lys577). A Biotinyl-binding domain is found at Ser622–Glu711. Lys677 is modified (N6-biotinyllysine).

As to quaternary structure, probably a dodecamer composed of six biotin-containing alpha subunits (MCCC1) and six beta (MCCC2) subunits. Interacts (via the biotin carboxylation domain) with SIRT4. It depends on biotin as a cofactor. Acetylated.

Its subcellular location is the mitochondrion matrix. It catalyses the reaction 3-methylbut-2-enoyl-CoA + hydrogencarbonate + ATP = 3-methyl-(2E)-glutaconyl-CoA + ADP + phosphate + H(+). It functions in the pathway amino-acid degradation; L-leucine degradation; (S)-3-hydroxy-3-methylglutaryl-CoA from 3-isovaleryl-CoA: step 2/3. Functionally, biotin-attachment subunit of the 3-methylcrotonyl-CoA carboxylase, an enzyme that catalyzes the conversion of 3-methylcrotonyl-CoA to 3-methylglutaconyl-CoA, a critical step for leucine and isovaleric acid catabolism. This chain is Methylcrotonoyl-CoA carboxylase subunit alpha, mitochondrial (Mccc1), found in Mus musculus (Mouse).